We begin with the raw amino-acid sequence, 401 residues long: L-rhamnonate dehydratase (401 aa).

2 residues coordinate substrate: histidine 29 and arginine 55. Residues aspartate 222, glutamate 248, and glutamate 276 each coordinate Mg(2+). Histidine 325 acts as the Proton acceptor in catalysis. Substrate is bound at residue glutamate 345.

Belongs to the mandelate racemase/muconate lactonizing enzyme family. RhamD subfamily. In terms of assembly, homooctamer; tetramer of dimers. Mg(2+) is required as a cofactor.

It carries out the reaction L-rhamnonate = 2-dehydro-3-deoxy-L-rhamnonate + H2O. Catalyzes the dehydration of L-rhamnonate to 2-keto-3-deoxy-L-rhamnonate (KDR). The protein is L-rhamnonate dehydratase of Klebsiella pneumoniae (strain 342).